The following is a 463-amino-acid chain: Hydroxyacid-oxoacid transhydrogenase, mitochondrial (463 aa).

It belongs to the iron-containing alcohol dehydrogenase family. Hydroxyacid-oxoacid transhydrogenase subfamily.

It localises to the mitochondrion. It carries out the reaction (S)-3-hydroxybutanoate + 2-oxoglutarate = (R)-2-hydroxyglutarate + acetoacetate. It catalyses the reaction 4-hydroxybutanoate + 2-oxoglutarate = (R)-2-hydroxyglutarate + succinate semialdehyde. Functionally, catalyzes the cofactor-independent reversible oxidation of gamma-hydroxybutyrate (GHB) to succinic semialdehyde (SSA) coupled to reduction of 2-ketoglutarate (2-KG) to D-2-hydroxyglutarate (D-2-HG). L-3-hydroxybutyrate (L-3-OHB) is also a substrate for HOT when using 2-KG as hydrogen acceptor, resulting in the formation of D-2-HG. In Xenopus tropicalis (Western clawed frog), this protein is Hydroxyacid-oxoacid transhydrogenase, mitochondrial (adhfe1).